The sequence spans 601 residues: Elongation factor 4 (601 aa).

Residues 7 to 189 (KNIRNFSIVA…AIVTRLPPPM (183 aa)) form the tr-type G domain. Residues 19 to 24 (DHGKST) and 136 to 139 (NKVD) each bind GTP.

This sequence belongs to the TRAFAC class translation factor GTPase superfamily. Classic translation factor GTPase family. LepA subfamily.

Its subcellular location is the cell inner membrane. The catalysed reaction is GTP + H2O = GDP + phosphate + H(+). In terms of biological role, required for accurate and efficient protein synthesis under certain stress conditions. May act as a fidelity factor of the translation reaction, by catalyzing a one-codon backward translocation of tRNAs on improperly translocated ribosomes. Back-translocation proceeds from a post-translocation (POST) complex to a pre-translocation (PRE) complex, thus giving elongation factor G a second chance to translocate the tRNAs correctly. Binds to ribosomes in a GTP-dependent manner. This chain is Elongation factor 4, found in Xanthobacter autotrophicus (strain ATCC BAA-1158 / Py2).